The primary structure comprises 486 residues: Glutamyl-tRNA(Gln) amidotransferase subunit A (486 aa).

Active-site charge relay system residues include Lys-79 and Ser-154. Ser-178 serves as the catalytic Acyl-ester intermediate.

It belongs to the amidase family. GatA subfamily. As to quaternary structure, heterotrimer of A, B and C subunits.

It catalyses the reaction L-glutamyl-tRNA(Gln) + L-glutamine + ATP + H2O = L-glutaminyl-tRNA(Gln) + L-glutamate + ADP + phosphate + H(+). Functionally, allows the formation of correctly charged Gln-tRNA(Gln) through the transamidation of misacylated Glu-tRNA(Gln) in organisms which lack glutaminyl-tRNA synthetase. The reaction takes place in the presence of glutamine and ATP through an activated gamma-phospho-Glu-tRNA(Gln). This Dehalococcoides mccartyi (strain CBDB1) protein is Glutamyl-tRNA(Gln) amidotransferase subunit A.